The sequence spans 118 residues: Small ribosomal subunit protein uS13 (118 aa).

The segment at 94-118 is disordered; sequence GLPLRGQRTKTNARTRKGRRKGTSS.

It belongs to the universal ribosomal protein uS13 family. Part of the 30S ribosomal subunit. Forms a loose heterodimer with protein S19. Forms two bridges to the 50S subunit in the 70S ribosome.

Its function is as follows. Located at the top of the head of the 30S subunit, it contacts several helices of the 16S rRNA. In the 70S ribosome it contacts the 23S rRNA (bridge B1a) and protein L5 of the 50S subunit (bridge B1b), connecting the 2 subunits; these bridges are implicated in subunit movement. Contacts the tRNAs in the A and P-sites. The polypeptide is Small ribosomal subunit protein uS13 (Legionella pneumophila (strain Paris)).